The chain runs to 153 residues: Glucose-6-phosphate 1-dehydrogenase (153 aa).

2 residues coordinate NADP(+): Arg21 and Lys120. D-glucose 6-phosphate is bound at residue Lys120.

This sequence belongs to the glucose-6-phosphate dehydrogenase family.

The protein localises to the cytoplasm. It localises to the cytosol. It carries out the reaction D-glucose 6-phosphate + NADP(+) = 6-phospho-D-glucono-1,5-lactone + NADPH + H(+). It participates in carbohydrate degradation; pentose phosphate pathway; D-ribulose 5-phosphate from D-glucose 6-phosphate (oxidative stage): step 1/3. Cytosolic glucose-6-phosphate dehydrogenase that catalyzes the first and rate-limiting step of the oxidative branch within the pentose phosphate pathway/shunt, an alternative route to glycolysis for the dissimilation of carbohydrates and a major source of reducing power and metabolic intermediates for fatty acid and nucleic acid biosynthetic processes. This is Glucose-6-phosphate 1-dehydrogenase (ZW) from Culex pipiens (House mosquito).